Here is a 173-residue protein sequence, read N- to C-terminus: Crossover junction endodeoxyribonuclease RuvC (173 aa).

Active-site residues include Asp8, Glu67, and Asp139. Mg(2+)-binding residues include Asp8, Glu67, and Asp139.

Belongs to the RuvC family. As to quaternary structure, homodimer which binds Holliday junction (HJ) DNA. The HJ becomes 2-fold symmetrical on binding to RuvC with unstacked arms; it has a different conformation from HJ DNA in complex with RuvA. In the full resolvosome a probable DNA-RuvA(4)-RuvB(12)-RuvC(2) complex forms which resolves the HJ. Requires Mg(2+) as cofactor.

It localises to the cytoplasm. The catalysed reaction is Endonucleolytic cleavage at a junction such as a reciprocal single-stranded crossover between two homologous DNA duplexes (Holliday junction).. In terms of biological role, the RuvA-RuvB-RuvC complex processes Holliday junction (HJ) DNA during genetic recombination and DNA repair. Endonuclease that resolves HJ intermediates. Cleaves cruciform DNA by making single-stranded nicks across the HJ at symmetrical positions within the homologous arms, yielding a 5'-phosphate and a 3'-hydroxyl group; requires a central core of homology in the junction. The consensus cleavage sequence is 5'-(A/T)TT(C/G)-3'. Cleavage occurs on the 3'-side of the TT dinucleotide at the point of strand exchange. HJ branch migration catalyzed by RuvA-RuvB allows RuvC to scan DNA until it finds its consensus sequence, where it cleaves and resolves the cruciform DNA. The protein is Crossover junction endodeoxyribonuclease RuvC of Proteus mirabilis (strain HI4320).